A 433-amino-acid polypeptide reads, in one-letter code: Histidinol dehydrogenase (433 aa).

NAD(+) contacts are provided by Tyr-133, Gln-194, and Asn-217. Residues Ser-240, Gln-262, and His-265 each coordinate substrate. Residues Gln-262 and His-265 each contribute to the Zn(2+) site. Active-site proton acceptor residues include Glu-330 and His-331. Substrate contacts are provided by His-331, Asp-364, Glu-418, and His-423. Residue Asp-364 participates in Zn(2+) binding. Residue His-423 coordinates Zn(2+).

Belongs to the histidinol dehydrogenase family. It depends on Zn(2+) as a cofactor.

The enzyme catalyses L-histidinol + 2 NAD(+) + H2O = L-histidine + 2 NADH + 3 H(+). The protein operates within amino-acid biosynthesis; L-histidine biosynthesis; L-histidine from 5-phospho-alpha-D-ribose 1-diphosphate: step 9/9. In terms of biological role, catalyzes the sequential NAD-dependent oxidations of L-histidinol to L-histidinaldehyde and then to L-histidine. This chain is Histidinol dehydrogenase, found in Hydrogenovibrio crunogenus (strain DSM 25203 / XCL-2) (Thiomicrospira crunogena).